We begin with the raw amino-acid sequence, 197 residues long: Recombination protein RecR (197 aa).

The C4-type zinc-finger motif lies at 57 to 72 (CSVCFALTEQNPCPIC). The 96-residue stretch at 79-174 (SVICVVETSQ…RVTRLAHGIP (96 aa)) folds into the Toprim domain.

Belongs to the RecR family.

Its function is as follows. May play a role in DNA repair. It seems to be involved in an RecBC-independent recombinational process of DNA repair. It may act with RecF and RecO. In Trichlorobacter lovleyi (strain ATCC BAA-1151 / DSM 17278 / SZ) (Geobacter lovleyi), this protein is Recombination protein RecR.